Here is a 241-residue protein sequence, read N- to C-terminus: 1-(5-phosphoribosyl)-5-[(5-phosphoribosylamino)methylideneamino] imidazole-4-carboxamide isomerase (241 aa).

D8 acts as the Proton acceptor in catalysis. D127 (proton donor) is an active-site residue.

Belongs to the HisA/HisF family.

It localises to the cytoplasm. It catalyses the reaction 1-(5-phospho-beta-D-ribosyl)-5-[(5-phospho-beta-D-ribosylamino)methylideneamino]imidazole-4-carboxamide = 5-[(5-phospho-1-deoxy-D-ribulos-1-ylimino)methylamino]-1-(5-phospho-beta-D-ribosyl)imidazole-4-carboxamide. Its pathway is amino-acid biosynthesis; L-histidine biosynthesis; L-histidine from 5-phospho-alpha-D-ribose 1-diphosphate: step 4/9. In Thermotoga petrophila (strain ATCC BAA-488 / DSM 13995 / JCM 10881 / RKU-1), this protein is 1-(5-phosphoribosyl)-5-[(5-phosphoribosylamino)methylideneamino] imidazole-4-carboxamide isomerase.